The chain runs to 460 residues: Bifunctional protein GlmU (460 aa).

The pyrophosphorylase stretch occupies residues 1 to 229 (MTNYAIILAA…FNESLGVNDR (229 aa)). Residues 8–11 (LAAG), Lys22, Gln72, and 77–78 (GT) contribute to the UDP-N-acetyl-alpha-D-glucosamine site. Asp102 lines the Mg(2+) pocket. The UDP-N-acetyl-alpha-D-glucosamine site is built by Gly139, Glu154, Asn169, and Asn227. Residue Asn227 participates in Mg(2+) binding. The interval 230–250 (VALATAETVMRQRITQKHMVN) is linker. The tract at residues 251-460 (GVTFQNPETV…RLAHHPSRSK (210 aa)) is N-acetyltransferase. UDP-N-acetyl-alpha-D-glucosamine is bound by residues Arg332 and Lys350. His362 serves as the catalytic Proton acceptor. UDP-N-acetyl-alpha-D-glucosamine-binding residues include Tyr365 and Asn376. Residues Ala379, 385–386 (NY), Ser404, Ala422, and Arg439 contribute to the acetyl-CoA site.

This sequence in the N-terminal section; belongs to the N-acetylglucosamine-1-phosphate uridyltransferase family. The protein in the C-terminal section; belongs to the transferase hexapeptide repeat family. Homotrimer. Requires Mg(2+) as cofactor.

The protein localises to the cytoplasm. The enzyme catalyses alpha-D-glucosamine 1-phosphate + acetyl-CoA = N-acetyl-alpha-D-glucosamine 1-phosphate + CoA + H(+). The catalysed reaction is N-acetyl-alpha-D-glucosamine 1-phosphate + UTP + H(+) = UDP-N-acetyl-alpha-D-glucosamine + diphosphate. It participates in nucleotide-sugar biosynthesis; UDP-N-acetyl-alpha-D-glucosamine biosynthesis; N-acetyl-alpha-D-glucosamine 1-phosphate from alpha-D-glucosamine 6-phosphate (route II): step 2/2. It functions in the pathway nucleotide-sugar biosynthesis; UDP-N-acetyl-alpha-D-glucosamine biosynthesis; UDP-N-acetyl-alpha-D-glucosamine from N-acetyl-alpha-D-glucosamine 1-phosphate: step 1/1. Its pathway is bacterial outer membrane biogenesis; LPS lipid A biosynthesis. Catalyzes the last two sequential reactions in the de novo biosynthetic pathway for UDP-N-acetylglucosamine (UDP-GlcNAc). The C-terminal domain catalyzes the transfer of acetyl group from acetyl coenzyme A to glucosamine-1-phosphate (GlcN-1-P) to produce N-acetylglucosamine-1-phosphate (GlcNAc-1-P), which is converted into UDP-GlcNAc by the transfer of uridine 5-monophosphate (from uridine 5-triphosphate), a reaction catalyzed by the N-terminal domain. The sequence is that of Bifunctional protein GlmU from Streptococcus pyogenes serotype M28 (strain MGAS6180).